Here is a 150-residue protein sequence, read N- to C-terminus: Monooxygenase nsrS (150 aa).

Belongs to the avfA family.

It functions in the pathway secondary metabolite biosynthesis. Monooxygenase; part of the gene cluster that mediates the biosynthesis of the tetrahydroxanthone dimer neosartorin, which exhibits antibacterial activity. The two different monomeric units appear to be synthesized by the same set of enzymes, among which the Baeyer-Villiger monooxygenase nsrF is the key enzyme for the divergence of the biosynthetic routes. The pathway begins with the synthesis of atrochrysone thioester by the polyketide synthase nsrB. The atrochrysone carboxyl ACP thioesterase nsrC then breaks the thioester bond and releases the atrochrysone carboxylic acid from AacuL. Atrochrysone carboxylic acid is decarboxylated by the decarboxylase nsrE, and oxidized by the anthrone oxygenase nsrD to yield emodin. Emodin is then reduced to emodin hydroquinone by the oxidoreductase nsrR. A-ring reduction by the short chain dehydrogenase nsrJ, dehydration by the scytalone dehydratase-like protein nsrI and probable spontaneous re-oxidation, results in overall deoxygenation to chrysophanol. The Baeyer-Villiger monooxygenase nsrF accepts chrysophanol as a substrate to insert one oxygen atom at two different positions to yield the precursors of both monomric units. NsrF is promiscuous/flexible in interacting with the 2 (non methylated and methylated) aromatic rings of chrysophanol, thus diverging the biosynthetic pathway at this point. After the hydrolysis of the lactones, methylesterification by the methyltransferase nsrG yields respectively moniliphenone and 2,2',6'-trihydroxy-4-methyl-6-methoxya-cyldiphenylmethanone. The next steps are the hydroxylation by the FAD-dependent monooxygenase nsrK, followed by isomerization by the monooxygenase nsrQ. The short chain dehydrogenase/reductase nsrO then catalyzes the C-5 ketoreduction to give the xanthone skeleton of blennolide C and 5-acetylblennolide A. The acetyltransferase nsrL has a strict substrate specificity and uses only blennolide A but not blennolide C to yield 5-acetylblennolide A as the single-acetylated product. In the final step of the biosynthesis, the heterodimerization of the 2 xanthones, blennolide C and 5-acetylblennolide A, is catalyzed by the cytochrome P450 monooxygenase nsrP. NsrP can utilize at least three different xanthones as its substrates to perform the dimerization reaction. This chain is Monooxygenase nsrS, found in Aspergillus novofumigatus (strain IBT 16806).